The following is a 64-amino-acid chain: Anti-sigma-G factor Gin (64 aa).

Cysteine 11, cysteine 14, cysteine 30, and cysteine 33 together coordinate Zn(2+).

In terms of assembly, probably functions as a homodimer. Interacts with sigma-G factor, recognition occurs via the first 71 residues of sigma-G. Requires Zn(2+) as cofactor.

An anti-sigma-G factor, prevents premature activation of sigma-G factor in the forespore; overexpression leads to 1000-fold reduction in spore formation, spore formation stops after engulfment. Overexpression also inhibits sigma-G transcription activation activity. When both Gin and sigma-G are expressed in E.coli Gin inhibits sigma-G, strongly suggesting Gin inhibits by direct physical interaction. This Bacillus subtilis (strain 168) protein is Anti-sigma-G factor Gin.